The sequence spans 836 residues: Protein translocase subunit SecA (836 aa).

Residues Gln-85, 103 to 107, and Asp-492 contribute to the ATP site; that span reads GEGKT. Positions 786 to 817 are disordered; it reads REQVAKETSTNQGGDDTLKKQPIKKEPKIGRN. Positions 801 to 816 are enriched in basic and acidic residues; that stretch reads DTLKKQPIKKEPKIGR. Cys-820, Cys-822, Cys-831, and Cys-832 together coordinate Zn(2+).

Belongs to the SecA family. As to quaternary structure, monomer and homodimer. Part of the essential Sec protein translocation apparatus which comprises SecA, SecYEG and auxiliary proteins SecDF. Other proteins may also be involved. It depends on Zn(2+) as a cofactor.

Its subcellular location is the cell membrane. The protein resides in the cytoplasm. The catalysed reaction is ATP + H2O + cellular proteinSide 1 = ADP + phosphate + cellular proteinSide 2.. Its function is as follows. Part of the Sec protein translocase complex. Interacts with the SecYEG preprotein conducting channel. Has a central role in coupling the hydrolysis of ATP to the transfer of proteins into and across the cell membrane, serving as an ATP-driven molecular motor driving the stepwise translocation of polypeptide chains across the membrane. This is Protein translocase subunit SecA from Clostridium tetani (strain Massachusetts / E88).